Reading from the N-terminus, the 317-residue chain is Adenine deaminase (317 aa).

Zn(2+) is bound by residues H14, H16, and H194. The active-site Proton donor is E197. D275 contributes to the Zn(2+) binding site. D276 lines the substrate pocket.

It belongs to the metallo-dependent hydrolases superfamily. Adenosine and AMP deaminases family. Adenine deaminase type 2 subfamily. Zn(2+) serves as cofactor.

The catalysed reaction is adenine + H2O + H(+) = hypoxanthine + NH4(+). In terms of biological role, catalyzes the hydrolytic deamination of adenine to hypoxanthine. Plays an important role in the purine salvage pathway and in nitrogen catabolism. The sequence is that of Adenine deaminase from Pseudomonas fluorescens (strain Pf0-1).